We begin with the raw amino-acid sequence, 598 residues long: Thiamine transporter (598 aa).

Over 1–41 (MSFGSKVSRALRFLEIPVKDRASVSFLKNPDLQPIKSANQT) the chain is Cytoplasmic. A helical membrane pass occupies residues 42–62 (WGFWSNFAYWGVMSFSVGTWM). Over 63-73 (SASSALGVGLS) the chain is Extracellular. Residues 74 to 94 (YPETIGTFIVGDVLTIIFTLA) traverse the membrane as a helical segment. Over 95–111 (NSCPGYDWKVGFTLAQR) the chain is Cytoplasmic. A helical membrane pass occupies residues 112-132 (FVFGIYGSAFGIIIRILMSIV). Over 133–173 (NYGSNAWVGGLCINMILDSWSHHYLHLPNTLSSKVAMTTKE) the chain is Extracellular. The helical transmembrane segment at 174–194 (LIGFIIFHVLTAFCYLMKPYH) threads the bilayer. Topologically, residues 195 to 197 (MNY) are cytoplasmic. A helical membrane pass occupies residues 198–218 (ILIWSCVATFFSMLGMVIYLA). Over 219 to 240 (KQAHGVGELFTSTKSTATGSTK) the chain is Extracellular. A helical membrane pass occupies residues 241–261 (AWAWVYMISYWFGSVSPGSTN). The Cytoplasmic segment spans residues 262-274 (QSDYSRFGSSNWA). A helical membrane pass occupies residues 275-295 (IWAGTICALLIPTTLIPVFGV). Residues 296–332 (IGASTCDKLYGEQYWMPMDIFNHWLTTNYSAGARAGA) lie on the Extracellular side of the membrane. Residues 333 to 353 (FFCGLSFVLSQMSYTISNCGF) form a helical membrane-spanning segment. At 354–371 (ASGMDLAGLLPKYVDIKR) the chain is on the cytoplasmic side. The chain crosses the membrane as a helical span at residues 372–392 (GALFAACVSWACLPWNFYNSS). The Extracellular segment spans residues 393–394 (ST). The helical transmembrane segment at 395-415 (FLTVMSSFGVVMTPIISVMIC) threads the bilayer. Topologically, residues 416–446 (DNFLIRKRQYSITNAFILKGEYYFTKGVNWR) are cytoplasmic. The chain crosses the membrane as a helical span at residues 447 to 467 (AIVAWVCGMTPGLPGIAWEVN). The Extracellular portion of the chain corresponds to 468 to 483 (NDYFHNTGIVNFFYGD). Residues 484–504 (SFFSFLISFFVYWGLCLLFPF) form a helical membrane-spanning segment. Over 505–598 (KITVKHDDKD…QSSTASEKAA (94 aa)) the chain is Cytoplasmic. S560 carries the phosphoserine modification. A disordered region spans residues 574–598 (NTNEFEIVHHKNNEKQSSTASEKAA). Residues 588-598 (KQSSTASEKAA) are compositionally biased toward polar residues.

Belongs to the purine-cytosine permease (2.A.39) family.

The protein resides in the membrane. Responsible for intake of thiamine. This is Thiamine transporter (THI7) from Saccharomyces cerevisiae (strain ATCC 204508 / S288c) (Baker's yeast).